Reading from the N-terminus, the 463-residue chain is Mitochondrial dynamics protein MID51 (463 aa).

Over 1–23 the chain is Mitochondrial intermembrane; that stretch reads MAGAGERKGKKDDNGIGTAIDFV. The chain crosses the membrane as a helical span at residues 24–46; that stretch reads LSNARLVLGVGGAAMLGIATLAV. Residues 47 to 463 are Cytoplasmic-facing; sequence KRMYDRAISA…LSEPEVLLQT (417 aa). Residues 49-195 form a dimerization region; sequence MYDRAISAPT…LSGSLYDDLQ (147 aa). Residues serine 55, serine 59, serine 79, and serine 94 each carry the phosphoserine modification. The interval 57 to 79 is disordered; sequence PTSPTRLSHSGKRSWEEPNWMGS. The interval 104–123 is disordered; it reads AFDTDTFCPPRPKPVARKGQ. The important for interaction with DNM1L stretch occupies residues 160-169; the sequence is AAVDICAELR. ADP-binding residues include serine 187, serine 189, and histidine 201. An important for interaction with DNM1L region spans residues 234-243; that stretch reads RRENPEYFPR. Positions 340, 342, and 368 each coordinate ADP.

Belongs to the MID49/MID51 family. In terms of assembly, homodimer. Interacts with DNM1L.

Its subcellular location is the mitochondrion outer membrane. Mitochondrial outer membrane protein which regulates mitochondrial fission/fusion dynamics. Promotes the recruitment and association of the fission mediator dynamin-related protein 1 (DNM1L) to the mitochondrial surface independently of the mitochondrial fission FIS1 and MFF proteins. Regulates DNM1L GTPase activity and DNM1L oligomerization. Binds ADP and can also bind GDP, although with lower affinity. Does not bind CDP, UDP, ATP, AMP or GTP. Inhibits DNM1L GTPase activity in the absence of bound ADP. Requires ADP to stimulate DNM1L GTPase activity and the assembly of DNM1L into long, oligomeric tubules with a spiral pattern, as opposed to the ring-like DNM1L oligomers observed in the absence of bound ADP. Does not require ADP for its function in recruiting DNM1L. The protein is Mitochondrial dynamics protein MID51 (MIEF1) of Pongo abelii (Sumatran orangutan).